The primary structure comprises 44 residues: Antibacterial protein 3 (44 aa).

The residue at position 1 (Met1) is an N-formylmethionine.

It belongs to the staphylococcal hemolytic protein family.

The protein localises to the secreted. Functionally, has hemolytic activity and also inhibits the growth of gonococci. In Staphylococcus haemolyticus, this protein is Antibacterial protein 3.